Reading from the N-terminus, the 220-residue chain is Adenylate kinase (220 aa).

10–15 (GAGKGT) lines the ATP pocket. The tract at residues 30-59 (STGDMLRAAVKAGSPLGVEAKGYMDAGKLV) is NMP. AMP contacts are provided by residues T31, R36, 57–59 (KLV), 85–88 (GFPR), and Q92. Residues 122–159 (GRRTHPASGRTYHVKFNPPKVEGKDDVTGEPLIQRDDD) are LID. ATP-binding positions include R123 and 132 to 133 (TY). AMP is bound by residues R156 and R167. Residue G206 participates in ATP binding.

The protein belongs to the adenylate kinase family. As to quaternary structure, monomer.

Its subcellular location is the cytoplasm. The catalysed reaction is AMP + ATP = 2 ADP. It participates in purine metabolism; AMP biosynthesis via salvage pathway; AMP from ADP: step 1/1. Its function is as follows. Catalyzes the reversible transfer of the terminal phosphate group between ATP and AMP. Plays an important role in cellular energy homeostasis and in adenine nucleotide metabolism. The polypeptide is Adenylate kinase (Burkholderia ambifaria (strain ATCC BAA-244 / DSM 16087 / CCUG 44356 / LMG 19182 / AMMD) (Burkholderia cepacia (strain AMMD))).